The primary structure comprises 86 residues: MERNNRKVFTGRVVSDKMDKTIVVAVETKVRHKLYGKRVNYTKKYKAHDENNVAKVGDIVRIAETRPLSKDKRFRLVTVVEESVII.

The protein belongs to the universal ribosomal protein uS17 family. In terms of assembly, part of the 30S ribosomal subunit.

Functionally, one of the primary rRNA binding proteins, it binds specifically to the 5'-end of 16S ribosomal RNA. The protein is Small ribosomal subunit protein uS17 of Exiguobacterium sp. (strain ATCC BAA-1283 / AT1b).